The following is a 263-amino-acid chain: 4-hydroxy-tetrahydrodipicolinate reductase (263 aa).

NAD(+) is bound by residues 7-12 (GASGRM) and aspartate 33. Arginine 34 contacts NADP(+). NAD(+) contacts are provided by residues 96-98 (GTT) and 120-123 (APNM). The active-site Proton donor/acceptor is the histidine 153. Histidine 154 contacts (S)-2,3,4,5-tetrahydrodipicolinate. Lysine 157 acts as the Proton donor in catalysis. 163–164 (GT) serves as a coordination point for (S)-2,3,4,5-tetrahydrodipicolinate.

Belongs to the DapB family.

Its subcellular location is the cytoplasm. The enzyme catalyses (S)-2,3,4,5-tetrahydrodipicolinate + NAD(+) + H2O = (2S,4S)-4-hydroxy-2,3,4,5-tetrahydrodipicolinate + NADH + H(+). The catalysed reaction is (S)-2,3,4,5-tetrahydrodipicolinate + NADP(+) + H2O = (2S,4S)-4-hydroxy-2,3,4,5-tetrahydrodipicolinate + NADPH + H(+). Its pathway is amino-acid biosynthesis; L-lysine biosynthesis via DAP pathway; (S)-tetrahydrodipicolinate from L-aspartate: step 4/4. Functionally, catalyzes the conversion of 4-hydroxy-tetrahydrodipicolinate (HTPA) to tetrahydrodipicolinate. The polypeptide is 4-hydroxy-tetrahydrodipicolinate reductase (Ralstonia nicotianae (strain ATCC BAA-1114 / GMI1000) (Ralstonia solanacearum)).